The primary structure comprises 297 residues: CCAAT/enhancer-binding protein beta (297 aa).

Residues 1–22 (MHRLLAWDAACLPPPPAAFRPM) form a required for Lys-134 sumoylation region. Position 3 is an asymmetric dimethylarginine; by CARM1 (arginine 3). Residues 22–105 (MEVANFYYEP…YGAKPSKKPS (84 aa)) form a required for MYC transcriptional repression region. N6-acetyllysine; alternate is present on lysine 39. Lysine 39 carries the N6-methylated lysine; alternate modification. Lysine 99 and lysine 102 each carry N6-acetyllysine; by KAT2A and KAT2B. Lysine 103 carries the post-translational modification N6-acetyllysine; by KAT2A and KAT2B; alternate. Lysine 103 is covalently cross-linked (Glycyl lysine isopeptide (Lys-Gly) (interchain with G-Cter in SUMO2); alternate). Position 105 is a phosphoserine; by RPS6KA1 and PKC/PRKCA (serine 105). Residue lysine 134 forms a Glycyl lysine isopeptide (Lys-Gly) (interchain with G-Cter in SUMO2); alternate linkage. Lysine 134 participates in a covalent cross-link: Glycyl lysine isopeptide (Lys-Gly) (interchain with G-Cter in SUMO); alternate. Lysine 145 participates in a covalent cross-link: Glycyl lysine isopeptide (Lys-Gly) (interchain with G-Cter in SUMO2). The disordered stretch occupies residues 172–201 (SGSSGSLSTSSSSSPPGTPSPADAKAAPAA). Position 180 is a phosphothreonine; by GSK3-beta (threonine 180). 2 O-linked (GlcNAc) serine glycosylation sites follow: serine 181 and serine 182. Position 185 is a phosphoserine; by GSK3-beta (serine 185). Position 189 is a phosphothreonine; by RPS6KA1, CDK2 and MAPK (threonine 189). Glycyl lysine isopeptide (Lys-Gly) (interchain with G-Cter in SUMO2) cross-links involve residues lysine 212 and lysine 214. Residues 223–286 (SDEYKMRRER…STLRNLFKQL (64 aa)) form the bZIP domain. Positions 227-247 (KMRRERNNIAVRKSRDKAKMR) are basic motif. Phosphoserine; by PKC/PRKCA is present on serine 240. A leucine-zipper region spans residues 249-256 (LETQHKVL). Serine 277 bears the Phosphoserine; by CaMK2 mark. Lysine 284 participates in a covalent cross-link: Glycyl lysine isopeptide (Lys-Gly) (interchain with G-Cter in SUMO2).

This sequence belongs to the bZIP family. C/EBP subfamily. In terms of assembly, binds DNA as a homodimer and as a heterodimer. Interacts with MYB; within the complex, MYB and CEBPB bind to different promoter regions. Interacts with ATF4. Binds DNA as a heterodimer with ATF4. Can form stable heterodimers with CEBPA, CEBPD, CEBPE and CEBPG. Interacts with SIX1. Isoform 2 and isoform 3 also form heterodimers. Interacts with TRIM28 and PTGES2. Interacts with PRDM16. Interacts with CCDC85B. Forms a complex with THOC5. Interacts with ZNF638; this interaction increases transcriptional activation. Interacts with CIDEA and CIDEC; these interactions increase transcriptional activation of a subset of CEBPB downstream target genes. Interacts with DDIT3/CHOP. Interacts with EP300; recruits EP300 to chromatin. Interacts with RORA; the interaction disrupts interaction with EP300. Interacts (not methylated) with MED23, MED26, SMARCA2, SMARCB1 and SMARCC1. Interacts with KAT2A and KAT2B. Interacts with ATF5; EP300 is required for ATF5 and CEBPB interaction and DNA binding. Interacts with NFE2L1; the heterodimer represses expression of DSPP during odontoblast differentiation. In terms of processing, phosphorylated at Thr-189 by MAPK and CDK2, serves to prime phosphorylation at Thr-180 and Ser-185 by GSK3B and acquire DNA-binding as well as transactivation activities, required to induce adipogenesis. MAPK and CDK2 act sequentially to maintain Thr-189 in the primed phosphorylated state during mitotical cloning expansion and thereby progression of terminal differentiation. Phosphorylation at Ser-105 enhances transactivation activity. Phosphorylation at Ser-277 in response to calcium increases transactivation activity. Phosphorylated at Thr-189 by RPS6KA1. Methylated. Methylation at Arg-3 by CARM1 and at Lys-39 by EHMT2 inhibit transactivation activity. Methylation is probably inhibited by phosphorylation at Thr-189. Post-translationally, sumoylated by polymeric chains of SUMO2 or SUMO3. Sumoylation at Lys-134 is required for inhibition of T-cells proliferation. In adipocytes, sumoylation at Lys-134 by PIAS1 leads to ubiquitination and subsequent proteasomal degradation. Desumoylated by SENP2, which abolishes ubiquitination and stabilizes protein levels. In terms of processing, ubiquitinated, leading to proteasomal degradation. O-glycosylated, glycosylation at Ser-181 and Ser-182 prevents phosphorylation on Thr-189, Ser-185 and Thr-180 and DNA binding activity which delays the adipocyte differentiation program. Post-translationally, acetylated. Acetylation at Lys-39 is an important and dynamic regulatory event that contributes to its ability to transactivate target genes, including those associated with adipogenesis and adipocyte function. Deacetylation by HDAC1 represses its transactivation activity. Acetylated by KAT2A and KAT2B within a cluster of lysine residues between amino acids 99-103, this acetylation is strongly induced by glucocorticoid treatment and enhances transactivation activity. As to expression, liver and lung.

The protein localises to the nucleus. It localises to the cytoplasm. Important transcription factor regulating the expression of genes involved in immune and inflammatory responses. Also plays a significant role in adipogenesis, as well as in the gluconeogenic pathway, liver regeneration, and hematopoiesis. The consensus recognition site is 5'-T[TG]NNGNAA[TG]-3'. Its functional capacity is governed by protein interactions and post-translational protein modifications. During early embryogenesis, plays essential and redundant roles with CEBPA. Has a promitotic effect on many cell types such as hepatocytes and adipocytes but has an antiproliferative effect on T-cells by repressing MYC expression, facilitating differentiation along the T-helper 2 lineage. Binds to regulatory regions of several acute-phase and cytokines genes and plays a role in the regulation of acute-phase reaction and inflammation. Also plays a role in intracellular bacteria killing. During adipogenesis, is rapidly expressed and, after activation by phosphorylation, induces CEBPA and PPARG, which turn on the series of adipocyte genes that give rise to the adipocyte phenotype. The delayed transactivation of the CEBPA and PPARG genes by CEBPB appears necessary to allow mitotic clonal expansion and thereby progression of terminal differentiation. Essential for female reproduction because of a critical role in ovarian follicle development. Restricts osteoclastogenesis: together with NFE2L1; represses expression of DSPP during odontoblast differentiation. Functionally, essential for gene expression induction in activated macrophages. Plays a major role in immune responses such as CD4(+) T-cell response, granuloma formation and endotoxin shock. Not essential for intracellular bacteria killing. Its function is as follows. Acts as a dominant negative through heterodimerization with isoform 2. Promotes osteoblast differentiation and osteoclastogenesis. In Rattus norvegicus (Rat), this protein is CCAAT/enhancer-binding protein beta.